Here is a 553-residue protein sequence, read N- to C-terminus: ATP synthase subunit alpha (553 aa).

Residue 173-180 (GDRQTGKT) participates in ATP binding. Positions 527-553 (EALDPSAVEREEIAVHHRKPSDETAGH) are disordered. The span at 533 to 553 (AVEREEIAVHHRKPSDETAGH) shows a compositional bias: basic and acidic residues.

It belongs to the ATPase alpha/beta chains family. F-type ATPases have 2 components, CF(1) - the catalytic core - and CF(0) - the membrane proton channel. CF(1) has five subunits: alpha(3), beta(3), gamma(1), delta(1), epsilon(1). CF(0) has three main subunits: a(1), b(2) and c(9-12). The alpha and beta chains form an alternating ring which encloses part of the gamma chain. CF(1) is attached to CF(0) by a central stalk formed by the gamma and epsilon chains, while a peripheral stalk is formed by the delta and b chains.

The protein resides in the cell membrane. It catalyses the reaction ATP + H2O + 4 H(+)(in) = ADP + phosphate + 5 H(+)(out). Its function is as follows. Produces ATP from ADP in the presence of a proton gradient across the membrane. The alpha chain is a regulatory subunit. The polypeptide is ATP synthase subunit alpha (Parafrankia sp. (strain EAN1pec)).